A 129-amino-acid polypeptide reads, in one-letter code: Glycine cleavage system H protein (129 aa).

The region spanning 24 to 106 (LLKIGVSEFA…IGNGWLLIIK (83 aa)) is the Lipoyl-binding domain. N6-lipoyllysine is present on K65.

This sequence belongs to the GcvH family. The glycine cleavage system is composed of four proteins: P, T, L and H. It depends on (R)-lipoate as a cofactor.

The glycine cleavage system catalyzes the degradation of glycine. The H protein shuttles the methylamine group of glycine from the P protein to the T protein. The sequence is that of Glycine cleavage system H protein from Prochlorococcus marinus (strain MIT 9515).